Consider the following 503-residue polypeptide: MVTKERNAALKIVMLVASALTLHPQQALAQTAGRPLADVVGKTLCTYSKTAKRQAANLAQTLQRASSAAKQSRQAQQLAALALAKLPDYKEAAATLLIYATHKIQDAQASIENWTGENTKLVGQAMYSSGRIDELMLLLEGHREDGANGQDKTCLGAAAGGNTVNEFVKTECDTESGHNIEADNSNIGQAATTLSQESTDPEASGGASCKITANLATDYDSHANELPLLGGLLTIHNAGGFKTGQSLQTAAPTNKLISALKNKGAGVAAKLATVTSAAPTSKQELKTLLASKGERAKLQAANDEYNNWKPGAKPEDFDAHIKKVFGAEDGKDSAYAIALEGISIEAPLGGGQTQNKQLYSMQPKDLMAALIGTIAELQTAAATKPACPGHKQTTTESDALCSKIKDANECNSKHFCSYNGTETDSAKKCKYNATKASASDAPVTQAQTTSRSETPAEKCTGKKKDDCKDGCKWEAETCKDSSILLTKNFALSVVSAALVALLF.

The signal sequence occupies residues 1 to 29 (MVTKERNAALKIVMLVASALTLHPQQALA). 2 cysteine pairs are disulfide-bonded: cysteine 45–cysteine 172 and cysteine 154–cysteine 209. Asparagine 113 carries N-linked (GlcNAc...) asparagine glycosylation. N-linked (GlcNAc...) asparagine glycosylation is found at asparagine 419 and asparagine 432. Aspartate 480 carries GPI-anchor amidated aspartate lipidation. The propeptide at 481–503 (SSILLTKNFALSVVSAALVALLF) is removed in mature form.

It is found in the cell membrane. Its function is as follows. VSG forms a coat on the surface of the parasite. The trypanosome evades the immune response of the host by expressing a series of antigenically distinct VSGs from an estimated 1000 VSG genes. The polypeptide is Variant surface glycoprotein AnTaT 1.1 (Trypanosoma brucei brucei).